A 241-amino-acid polypeptide reads, in one-letter code: Methylthioribulose-1-phosphate dehydratase (241 aa).

Position 96 (C96) interacts with substrate. Residues H114 and H116 each contribute to the Zn(2+) site. E138 acts as the Proton donor/acceptor in catalysis. A Zn(2+)-binding site is contributed by H194.

This sequence belongs to the aldolase class II family. MtnB subfamily. As to quaternary structure, homotetramer. Interacts with APAF1. May interact with CASP1. Zn(2+) is required as a cofactor. In terms of tissue distribution, expressed in skeletal muscle (at protein level).

It is found in the cytoplasm. The catalysed reaction is 5-(methylsulfanyl)-D-ribulose 1-phosphate = 5-methylsulfanyl-2,3-dioxopentyl phosphate + H2O. It functions in the pathway amino-acid biosynthesis; L-methionine biosynthesis via salvage pathway; L-methionine from S-methyl-5-thio-alpha-D-ribose 1-phosphate: step 2/6. In terms of biological role, catalyzes the dehydration of methylthioribulose-1-phosphate (MTRu-1-P) into 2,3-diketo-5-methylthiopentyl-1-phosphate (DK-MTP-1-P). Functions in the methionine salvage pathway, which plays a key role in cancer, apoptosis, microbial proliferation and inflammation. May inhibit the CASP1-related inflammatory response (pyroptosis), the CASP9-dependent apoptotic pathway and the cytochrome c-dependent and APAF1-mediated cell death. The protein is Methylthioribulose-1-phosphate dehydratase of Mus musculus (Mouse).